A 199-amino-acid chain; its full sequence is NADH-quinone oxidoreductase subunit B 2 (199 aa).

[4Fe-4S] cluster contacts are provided by Cys78, Cys79, Cys143, and Cys173.

It belongs to the complex I 20 kDa subunit family. In terms of assembly, NDH-1 is composed of 14 different subunits. Subunits NuoB, C, D, E, F, and G constitute the peripheral sector of the complex. [4Fe-4S] cluster is required as a cofactor.

The protein resides in the cell inner membrane. The enzyme catalyses a quinone + NADH + 5 H(+)(in) = a quinol + NAD(+) + 4 H(+)(out). Functionally, NDH-1 shuttles electrons from NADH, via FMN and iron-sulfur (Fe-S) centers, to quinones in the respiratory chain. The immediate electron acceptor for the enzyme in this species is believed to be ubiquinone. Couples the redox reaction to proton translocation (for every two electrons transferred, four hydrogen ions are translocated across the cytoplasmic membrane), and thus conserves the redox energy in a proton gradient. This Rhodopseudomonas palustris (strain BisB5) protein is NADH-quinone oxidoreductase subunit B 2.